Consider the following 136-residue polypeptide: uncharacterized protein (136 aa).

The helical transmembrane segment at 40-62 (LFYSISLCVSLLLHISLCVSVYV) threads the bilayer.

Its subcellular location is the membrane. This is an uncharacterized protein from Homo sapiens (Human).